The primary structure comprises 270 residues: Imidazole glycerol phosphate synthase subunit HisF (270 aa).

Residues Asp11 and Asp130 contribute to the active site.

It belongs to the HisA/HisF family. Heterodimer of HisH and HisF.

The protein resides in the cytoplasm. It carries out the reaction 5-[(5-phospho-1-deoxy-D-ribulos-1-ylimino)methylamino]-1-(5-phospho-beta-D-ribosyl)imidazole-4-carboxamide + L-glutamine = D-erythro-1-(imidazol-4-yl)glycerol 3-phosphate + 5-amino-1-(5-phospho-beta-D-ribosyl)imidazole-4-carboxamide + L-glutamate + H(+). It functions in the pathway amino-acid biosynthesis; L-histidine biosynthesis; L-histidine from 5-phospho-alpha-D-ribose 1-diphosphate: step 5/9. Functionally, IGPS catalyzes the conversion of PRFAR and glutamine to IGP, AICAR and glutamate. The HisF subunit catalyzes the cyclization activity that produces IGP and AICAR from PRFAR using the ammonia provided by the HisH subunit. In Sorangium cellulosum (strain So ce56) (Polyangium cellulosum (strain So ce56)), this protein is Imidazole glycerol phosphate synthase subunit HisF.